Here is a 488-residue protein sequence, read N- to C-terminus: Aspartyl/glutamyl-tRNA(Asn/Gln) amidotransferase subunit B (488 aa).

The protein belongs to the GatB/GatE family. GatB subfamily. As to quaternary structure, heterotrimer of A, B and C subunits.

It carries out the reaction L-glutamyl-tRNA(Gln) + L-glutamine + ATP + H2O = L-glutaminyl-tRNA(Gln) + L-glutamate + ADP + phosphate + H(+). It catalyses the reaction L-aspartyl-tRNA(Asn) + L-glutamine + ATP + H2O = L-asparaginyl-tRNA(Asn) + L-glutamate + ADP + phosphate + 2 H(+). Allows the formation of correctly charged Asn-tRNA(Asn) or Gln-tRNA(Gln) through the transamidation of misacylated Asp-tRNA(Asn) or Glu-tRNA(Gln) in organisms which lack either or both of asparaginyl-tRNA or glutaminyl-tRNA synthetases. The reaction takes place in the presence of glutamine and ATP through an activated phospho-Asp-tRNA(Asn) or phospho-Glu-tRNA(Gln). The polypeptide is Aspartyl/glutamyl-tRNA(Asn/Gln) amidotransferase subunit B (Neorickettsia sennetsu (strain ATCC VR-367 / Miyayama) (Ehrlichia sennetsu)).